We begin with the raw amino-acid sequence, 272 residues long: B3 domain-containing protein Os10g0323000 (272 aa).

The segment at residues 39–132 is a DNA-binding region (TF-B3 1); sequence RYGENRKHGQ…TLDLLILDKH (94 aa). The segment at 139 to 171 is disordered; that stretch reads PPSKRDLKLKSKRSTHQDSKGHPSNTDPGPSRI. The span at 141–159 shows a compositional bias: basic and acidic residues; the sequence is SKRDLKLKSKRSTHQDSKG. The TF-B3 2 DNA-binding region spans 180-272; it reads ESSANTQLLV…THLGVIVDIF (93 aa).

The protein resides in the nucleus. The sequence is that of B3 domain-containing protein Os10g0323000 from Oryza sativa subsp. japonica (Rice).